Reading from the N-terminus, the 611-residue chain is Mitogen-activated protein kinase 10 (611 aa).

Residues 25–316 (YKIQEVIGKG…AEEALAHPYF (292 aa)) enclose the Protein kinase domain. Residues 31–39 (IGKGSYGVV) and K54 contribute to the ATP site. D151 (proton acceptor) is an active-site residue. T187 carries the phosphothreonine modification. A TXY motif is present at residues 187–189 (TDY). The residue at position 189 (Y189) is a Phosphotyrosine. The disordered stretch occupies residues 394–481 (ENGGNGPVIP…RVVGPVLPYE (88 aa)). Residues 426–439 (EQPRIGPSRDKPSD) show a composition bias toward basic and acidic residues.

It belongs to the protein kinase superfamily. CMGC Ser/Thr protein kinase family. MAP kinase subfamily. Post-translationally, dually phosphorylated on Thr-187 and Tyr-189, which activates the enzyme.

It carries out the reaction L-seryl-[protein] + ATP = O-phospho-L-seryl-[protein] + ADP + H(+). It catalyses the reaction L-threonyl-[protein] + ATP = O-phospho-L-threonyl-[protein] + ADP + H(+). Activated by threonine and tyrosine phosphorylation. This chain is Mitogen-activated protein kinase 10 (MPK10), found in Oryza sativa subsp. japonica (Rice).